The following is a 1732-amino-acid chain: Serine/threonine-protein kinase MRCK alpha (1732 aa).

One can recognise a Protein kinase domain in the interval Phe77–Phe343. ATP-binding positions include Ile83–Val91 and Lys106. The active-site Proton acceptor is Asp201. Phosphoserine; by autocatalysis occurs at positions 222 and 234. Residue Thr240 is modified to Phosphothreonine; by autocatalysis. Residues Ser344–Ser414 enclose the AGC-kinase C-terminal domain. 3 coiled-coil regions span residues Asn437–Gln670, Ser713–Gln820, and Leu880–Gly943. A disordered region spans residues Cys973–Ala1002. The Phorbol-ester/DAG-type zinc-finger motif lies at Thr1012 to Cys1062. In terms of domain architecture, PH spans Gly1082 to Lys1201. Position 1127 is a phosphoserine (Ser1127). The CNH domain maps to Ile1227 to Asn1499. A Phosphoserine modification is found at Ser1545. Residues Ile1571–Gly1584 enclose the CRIB domain. A disordered region spans residues Leu1592–Pro1732. Residues Ser1604–Lys1619 show a composition bias toward polar residues. Ser1611, Ser1613, Ser1629, Ser1651, Ser1664, Ser1669, Ser1693, Ser1719, and Ser1721 each carry phosphoserine. Low complexity predominate over residues Gly1625–Ala1640. Over residues Pro1665–Gly1674 the composition is skewed to low complexity.

Belongs to the protein kinase superfamily. AGC Ser/Thr protein kinase family. DMPK subfamily. Homodimer and homotetramer via the coiled coil regions. Interacts tightly with GTP-bound but not GDP-bound CDC42. Forms a tripartite complex with MYO18A and LURAP1 with the latter acting as an adapter connecting CDC42BPA and MYO18A. LURAP1 binding results in activation of CDC42BPA by abolition of its negative autoregulation. Interacts with LURAP1. Interacts (via AGC-kinase C-terminal domain) with FAM89B/LRAP25 (via LRR repeat). Forms a tripartite complex with FAM89B/LRAP25 and LIMK1. Mg(2+) is required as a cofactor. Post-translationally, proteolytically cleaved by caspases upon apoptosis induction. The cleavage at Asp-478 by CASP3 increases its kinase activity (in vitro). As to expression, highly expressed in the brain and lung and present in lower levels in all other tissues tested.

The protein resides in the cytoplasm. It localises to the cell projection. Its subcellular location is the lamellipodium. The catalysed reaction is L-seryl-[protein] + ATP = O-phospho-L-seryl-[protein] + ADP + H(+). The enzyme catalyses L-threonyl-[protein] + ATP = O-phospho-L-threonyl-[protein] + ADP + H(+). With respect to regulation, maintained in an inactive, closed conformation by an interaction between the kinase domain and the negative autoregulatory C-terminal coiled-coil region. Agonist binding to the phorbol ester binding site disrupts this, releasing the kinase domain to allow N-terminus-mediated dimerization and kinase activation by transautophosphorylation. Inhibited by chelerythrine chloride. Its function is as follows. Serine/threonine-protein kinase which is an important downstream effector of CDC42 and plays a role in the regulation of cytoskeleton reorganization and cell migration. Regulates actin cytoskeletal reorganization via phosphorylation of PPP1R12A and MYL9/MLC2. In concert with MYO18A and LURAP1, is involved in modulating lamellar actomyosin retrograde flow that is crucial to cell protrusion and migration. Phosphorylates: PPP1R12C, LIMK1 and LIMK2. May play a role in TFRC-mediated iron uptake. In concert with FAM89B/LRAP25 mediates the targeting of LIMK1 to the lamellipodium resulting in its activation and subsequent phosphorylation of CFL1 which is important for lamellipodial F-actin regulation. Triggers the formation of an extrusion apical actin ring required for epithelial extrusion of apoptotic cells. This is Serine/threonine-protein kinase MRCK alpha from Rattus norvegicus (Rat).